Reading from the N-terminus, the 165-residue chain is 5-formyltetrahydrofolate cyclo-ligase (165 aa).

4–8 (KNSLR) contacts ATP. Substrate is bound by residues Ile51 and Glu56. 116–124 (RIGFGKGYY) is a binding site for ATP. Asp125 lines the Mg(2+) pocket. Positions 126 and 154 each coordinate ATP. Asp155 serves as a coordination point for Mg(2+).

This sequence belongs to the 5-formyltetrahydrofolate cyclo-ligase family. As to quaternary structure, monomer or homodimer. Mg(2+) serves as cofactor.

The protein resides in the cytoplasm. It carries out the reaction (6S)-5-formyl-5,6,7,8-tetrahydrofolate + ATP = (6R)-5,10-methenyltetrahydrofolate + ADP + phosphate. In terms of biological role, involved in folate metabolism. Catalyzes the irreversible conversion of 5-formyltetrahydrofolate (5-FTHF) to yield 5,10-methenyltetrahydrofolate. The sequence is that of 5-formyltetrahydrofolate cyclo-ligase from Mycoplasma genitalium (strain ATCC 33530 / DSM 19775 / NCTC 10195 / G37) (Mycoplasmoides genitalium).